A 215-amino-acid polypeptide reads, in one-letter code: CASP-like protein 1E1 (215 aa).

The Cytoplasmic segment spans residues 1–51; the sequence is MESSRGKPGLNGSGGGAAAFDYSSRRGYYTGAGAALPPLAAGSRAPPVDPC. Residues 52–72 traverse the membrane as a helical segment; it reads CVVLRVFVLLGTLASAVVMAA. Over 73-103 the chain is Extracellular; the sequence is DRQSTTVQIAAGEELAPPLRVPVTAKWTYSS. Residues 104 to 124 traverse the membrane as a helical segment; that stretch reads AFVYFVVANAMVFAFSAAALA. Residues 125 to 130 lie on the Cytoplasmic side of the membrane; that stretch reads AVRRRS. A helical transmembrane segment spans residues 131-151; the sequence is AVVPVMVGDLVAMALLFSAVG. Residues 152 to 185 lie on the Extracellular side of the membrane; it reads AAAQFGLLGERGNAHVRWAKVCDVYGPFCERAMA. A helical membrane pass occupies residues 186–206; that stretch reads AVVVALIAAFADLVLLMLTIL. Residues 207-215 are Cytoplasmic-facing; sequence TIHKASSYY.

Belongs to the Casparian strip membrane proteins (CASP) family. In terms of assembly, homodimer and heterodimers.

It is found in the cell membrane. The polypeptide is CASP-like protein 1E1 (Oryza sativa subsp. japonica (Rice)).